Consider the following 125-residue polypeptide: Oxytocin-neurophysin 1 (125 aa).

The signal sequence occupies residues 1-19 (MACPSLACCLLGLLALTSA). A disulfide bridge connects residues Cys20 and Cys25. The residue at position 28 (Gly28) is a Glycine amide. Intrachain disulfides connect Cys41–Cys85, Cys44–Cys58, Cys52–Cys75, Cys59–Cys65, Cys92–Cys104, Cys98–Cys116, and Cys105–Cys110.

It belongs to the vasopressin/oxytocin family. In terms of assembly, interacts with oxytocin receptor (Ki=1.5 nM). Interacts with vasopressin V1aR/AVPR1A (Ki=37 nM), V1bR/AVPR1B (Ki=222 nM), and V2R/AVPR2 receptors (Ki=823 nM).

In terms of biological role, neurophysin 1 specifically binds oxytocin. Oxytocin causes contraction of the smooth muscle of the uterus and of the mammary gland. Acts by binding to oxytocin receptor (OXTR). The protein is Oxytocin-neurophysin 1 (Oxt) of Rattus norvegicus (Rat).